We begin with the raw amino-acid sequence, 291 residues long: Protease HtpX homolog (291 aa).

A run of 2 helical transmembrane segments spans residues 4–24 (IALF…TASL) and 38–58 (LGAL…ISLL). His-144 contributes to the Zn(2+) binding site. Glu-145 is an active-site residue. Residue His-148 participates in Zn(2+) binding. Transmembrane regions (helical) follow at residues 159–179 (LIQG…GYFI) and 197–217 (VTTV…VAWF). Glu-222 is a binding site for Zn(2+).

The protein belongs to the peptidase M48B family. Zn(2+) serves as cofactor.

The protein resides in the cell inner membrane. This is Protease HtpX homolog from Leptothrix cholodnii (strain ATCC 51168 / LMG 8142 / SP-6) (Leptothrix discophora (strain SP-6)).